Here is a 305-residue protein sequence, read N- to C-terminus: Phosphatidate cytidylyltransferase (305 aa).

7 consecutive transmembrane segments (helical) span residues 24–44, 97–117, 124–144, 151–171, 202–222, 232–252, and 277–297; these read LLVF…AFIV, PEHV…HLVF, LGPI…SVPI, LYGF…IFLI, TVVG…IFYS, IAMP…GFFG, and MLDV…ILLI.

The protein belongs to the CDS family.

It localises to the cell membrane. It catalyses the reaction a 1,2-diacyl-sn-glycero-3-phosphate + CTP + H(+) = a CDP-1,2-diacyl-sn-glycerol + diphosphate. Its pathway is phospholipid metabolism; CDP-diacylglycerol biosynthesis; CDP-diacylglycerol from sn-glycerol 3-phosphate: step 3/3. The polypeptide is Phosphatidate cytidylyltransferase (cdsA) (Chlamydia muridarum (strain MoPn / Nigg)).